The primary structure comprises 456 residues: Glutamyl-tRNA reductase (456 aa).

Substrate is bound by residues 49–52 (TCNR), serine 109, 114–116 (EQQ), and glutamine 120. Cysteine 50 acts as the Nucleophile in catalysis. 189 to 194 (GAGSMG) lines the NADP(+) pocket.

It belongs to the glutamyl-tRNA reductase family. In terms of assembly, homodimer.

The catalysed reaction is (S)-4-amino-5-oxopentanoate + tRNA(Glu) + NADP(+) = L-glutamyl-tRNA(Glu) + NADPH + H(+). Its pathway is porphyrin-containing compound metabolism; protoporphyrin-IX biosynthesis; 5-aminolevulinate from L-glutamyl-tRNA(Glu): step 1/2. Catalyzes the NADPH-dependent reduction of glutamyl-tRNA(Glu) to glutamate 1-semialdehyde (GSA). This is Glutamyl-tRNA reductase from Mycolicibacterium vanbaalenii (strain DSM 7251 / JCM 13017 / BCRC 16820 / KCTC 9966 / NRRL B-24157 / PYR-1) (Mycobacterium vanbaalenii).